Consider the following 478-residue polypeptide: Aspartyl/glutamyl-tRNA(Asn/Gln) amidotransferase subunit B (478 aa).

This sequence belongs to the GatB/GatE family. GatB subfamily. In terms of assembly, heterotrimer of A, B and C subunits.

It carries out the reaction L-glutamyl-tRNA(Gln) + L-glutamine + ATP + H2O = L-glutaminyl-tRNA(Gln) + L-glutamate + ADP + phosphate + H(+). The catalysed reaction is L-aspartyl-tRNA(Asn) + L-glutamine + ATP + H2O = L-asparaginyl-tRNA(Asn) + L-glutamate + ADP + phosphate + 2 H(+). Functionally, allows the formation of correctly charged Asn-tRNA(Asn) or Gln-tRNA(Gln) through the transamidation of misacylated Asp-tRNA(Asn) or Glu-tRNA(Gln) in organisms which lack either or both of asparaginyl-tRNA or glutaminyl-tRNA synthetases. The reaction takes place in the presence of glutamine and ATP through an activated phospho-Asp-tRNA(Asn) or phospho-Glu-tRNA(Gln). This chain is Aspartyl/glutamyl-tRNA(Asn/Gln) amidotransferase subunit B, found in Brevibacillus brevis (strain 47 / JCM 6285 / NBRC 100599).